The primary structure comprises 363 residues: uncharacterized protein (363 aa).

S-adenosyl-L-methionine contacts are provided by Gln198, Tyr225, Glu246, and Asp291. Cys318 serves as the catalytic Nucleophile.

It belongs to the class I-like SAM-binding methyltransferase superfamily. RNA M5U methyltransferase family.

This is an uncharacterized protein from Mycoplasma mobile (strain ATCC 43663 / 163K / NCTC 11711) (Mesomycoplasma mobile).